Here is a 339-residue protein sequence, read N- to C-terminus: Dihydroorotase (339 aa).

Zn(2+) contacts are provided by H12 and H14. Residues 14-16 (HVR) and N40 each bind substrate. Residues K94, H133, H167, and D239 each contribute to the Zn(2+) site. K94 carries the N6-carboxylysine modification. A substrate-binding site is contributed by H133. The active site involves D239. Positions 243 and 255 each coordinate substrate.

This sequence belongs to the metallo-dependent hydrolases superfamily. DHOase family. Class II DHOase subfamily. Homodimer. It depends on Zn(2+) as a cofactor.

It carries out the reaction (S)-dihydroorotate + H2O = N-carbamoyl-L-aspartate + H(+). It functions in the pathway pyrimidine metabolism; UMP biosynthesis via de novo pathway; (S)-dihydroorotate from bicarbonate: step 3/3. Its function is as follows. Catalyzes the reversible cyclization of carbamoyl aspartate to dihydroorotate. This Helicobacter pylori (strain ATCC 700392 / 26695) (Campylobacter pylori) protein is Dihydroorotase.